A 252-amino-acid polypeptide reads, in one-letter code: Sororin (252 aa).

Disordered stretches follow at residues 1–48 (MSGR…WPKT) and 72–142 (AVQS…SKKV). A phosphoserine mark is found at S21, S33, S35, S75, S79, and S83. The segment covering 86 to 104 (LEKENEPPGRELTKEDLFK) has biased composition (basic and acidic residues). The KEN box motif lies at 88–90 (KEN). Position 98 is a phosphothreonine (T98). Low complexity predominate over residues 105–116 (THSVPATPTSTP). The residue at position 107 (S107) is a Phosphoserine. A phosphothreonine mark is found at T111 and T115. Over residues 124–140 (SSSKEGELDARDLEMSK) the composition is skewed to basic and acidic residues. A Phosphoserine modification is found at S154. The residue at position 159 (T159) is a Phosphothreonine. Residues 166-168 (FGF) carry the FGF motif motif. The segment at 199–222 (WAPDMTLPGISPPPEKQKRKKKKM) is disordered. S209 carries the post-translational modification Phosphoserine. Positions 230-252 (LDEWAAAMNAEFEAAEQFDLLVE) are C-terminal Sororin domain.

It belongs to the sororin family. In terms of assembly, interacts with the APC/C complex. Interacts with the chromatin-bound cohesin complex; the interaction is indirect, occurs after DNA replication and requires acetylation of the cohesin component SMC3. Interacts (via the FGF motif) with PDS5A and PDS5B; the interaction is direct and prevents the interaction of PDS5A with WAPL. Phosphorylated. Phosphorylation, as cells enter mitosis, disrupts the interaction with PDS5A and relieves the inhibition of WAPL by CDCA5. Post-translationally, ubiquitinated by the APC/C complex in G1, leading to its degradation.

It is found in the nucleus. It localises to the chromosome. Its subcellular location is the cytoplasm. Functionally, regulator of sister chromatid cohesion in mitosis stabilizing cohesin complex association with chromatin. May antagonize the action of WAPL which stimulates cohesin dissociation from chromatin. Cohesion ensures that chromosome partitioning is accurate in both meiotic and mitotic cells and plays an important role in DNA repair. Required for efficient DNA double-stranded break repair. The chain is Sororin (CDCA5) from Homo sapiens (Human).